The chain runs to 173 residues: Alpha-crystallin A chain (173 aa).

At methionine 1 the chain carries N-acetylmethionine. The segment at 1–63 (MDVTIQHPWF…RTVLDSGISE (63 aa)) is required for complex formation with BFSP1 and BFSP2; during homooligomerization, mediates the association of 2 dimers to form a tetramer. Deamidated glutamine; partial is present on glutamine 6. Residue serine 45 is modified to Phosphoserine. Glutamine 50 is subject to Deamidated glutamine; partial. In terms of domain architecture, sHSP spans 52-164 (LFRTVLDSGI…AERAIPVSRE (113 aa)). The residue at position 70 (lysine 70) is an N6-acetyllysine. Glutamine 90 is subject to Deamidated glutamine; partial. N6-acetyllysine is present on lysine 99. Histidine 100 is a binding site for Zn(2+). The residue at position 101 (asparagine 101) is a Deamidated asparagine; partial. Zn(2+) is bound by residues glutamate 102 and histidine 107. A Phosphoserine modification is found at serine 122. Position 123 is a deamidated asparagine; partial (asparagine 123). Cysteine 131 and cysteine 142 form a disulfide bridge. Glutamine 147 carries the post-translational modification Deamidated glutamine; partial. Residue histidine 154 participates in Zn(2+) binding. O-linked (GlcNAc) serine glycosylation occurs at serine 162.

It belongs to the small heat shock protein (HSP20) family. Heteropolymer composed of three CRYAA and one CRYAB subunits. Inter-subunit bridging via zinc ions enhances stability, which is crucial as there is no protein turn over in the lens. Can also form homodimers and homotetramers (dimers of dimers) which serve as the building blocks of homooligomers. Within homooligomers, the zinc-binding motif is created from residues of 3 different molecules. His-100 and Glu-102 from one molecule are ligands of the zinc ion, and His-107 and His-154 residues from additional molecules complete the site with tetrahedral coordination geometry. Part of a complex required for lens intermediate filament formation composed of BFSP1, BFSP2 and CRYAA. O-glycosylated; contains N-acetylglucosamine side chains. Post-translationally, deamidation of Asn-101 in lens occurs mostly during the first 30 years of age, followed by a small additional amount of deamidation (approximately 5%) during the next approximately 38 years, resulting in a maximum of approximately 50% deamidation during the lifetime of the individual. In terms of processing, phosphorylation on Ser-122 seems to be developmentally regulated. Absent in the first months of life, it appears during the first 12 years of human lifetime. The relative amount of phosphorylated form versus unphosphorylated form does not change over the lifetime of the individual. Acetylation at Lys-70 may increase chaperone activity. Post-translationally, undergoes age-dependent proteolytical cleavage at the C-terminus. Alpha-crystallin A(1-172) is the most predominant form produced most rapidly during the first 12 years of age and after this age is present in approximately 50% of the lens molecules. In terms of processing, in young individuals and during the first approximately 30 years of life, less than half molecules contain an intramolecular disulfide bond (oxidized form), while in the remaining fraction the cysteines are in the free sulfhydryl form (reduced form). With aging, the amount of oxidized form increases up to 90% and it becomes a major constituent of high molecular weight aggregates, concomitant with an age-dependent loss of its chaperone activity. The reduced form is undetectable in cataractous lenses. Expressed in the eye lens (at protein level).

It is found in the cytoplasm. Its subcellular location is the nucleus. Functionally, contributes to the transparency and refractive index of the lens. In its oxidized form (absence of intramolecular disulfide bond), acts as a chaperone, preventing aggregation of various proteins under a wide range of stress conditions. Required for the correct formation of lens intermediate filaments as part of a complex composed of BFSP1, BFSP2 and CRYAA. The chain is Alpha-crystallin A chain (CRYAA) from Homo sapiens (Human).